The primary structure comprises 284 residues: Gap junction beta-1 protein (284 aa).

Over 1–22 (MNWTGLYTLLSGVNRHSTAIGR) the chain is Cytoplasmic. The helical transmembrane segment at 23 to 45 (VWLSVIFIFRIMVLVVAAESVWG) threads the bilayer. Residues 46-75 (DEKSSFICNTLQPGCNSVCYDHFFPISHVR) are Extracellular-facing. The chain crosses the membrane as a helical span at residues 76 to 95 (LWSLQLILVSTPALLVAMHV). Over 96-130 (AHQQHIEKKMLRLEGHGDPLHLEEVKRHKVHISGT) the chain is Cytoplasmic. A helical membrane pass occupies residues 131–153 (LWWTYVISVVFRLLFEAAFMYVF). Topologically, residues 154-191 (YLLYPGYAMVRLVKCDAYPCPNTVDCFVSRPTEKTIFT) are extracellular. The helical transmembrane segment at 192–214 (VFMLAASGICIILNVAEVVYLIF) threads the bilayer. The Cytoplasmic portion of the chain corresponds to 215–284 (RACARRAQRR…AEKSDRCSAC (70 aa)). 4 positions are modified to phosphoserine: Ser-233, Ser-259, Ser-267, and Ser-278.

The protein belongs to the connexin family. Beta-type (group I) subfamily. A connexon is composed of a hexamer of connexins. Interacts with CNST.

The protein localises to the cell membrane. It is found in the cell junction. Its subcellular location is the gap junction. Its function is as follows. One gap junction consists of a cluster of closely packed pairs of transmembrane channels, the connexons, through which materials of low MW diffuse from one cell to a neighboring cell. This Bos taurus (Bovine) protein is Gap junction beta-1 protein (GJB1).